The primary structure comprises 205 residues: Large ribosomal subunit protein uL13 (205 aa).

This sequence belongs to the universal ribosomal protein uL13 family.

The polypeptide is Large ribosomal subunit protein uL13 (RPL13A) (Lupinus luteus (European yellow lupine)).